We begin with the raw amino-acid sequence, 88 residues long: Beta-insect excitatory toxin BmKIT1 (88 aa).

The signal sequence occupies residues 1–18 (MKFFLIFLVIFPIMGVLG). The region spanning 20-83 (KNGYAVDSSG…IKDATKSYCD (64 aa)) is the LCN-type CS-alpha/beta domain. Disulfide bonds link Cys34–Cys55, Cys40–Cys60, Cys44–Cys62, and Cys56–Cys82. At Ile87 the chain carries Isoleucine amide.

It belongs to the long (4 C-C) scorpion toxin superfamily. Sodium channel inhibitor family. Beta subfamily. In terms of tissue distribution, expressed by the venom gland.

Its subcellular location is the secreted. Its function is as follows. Excitatory insect beta-toxins induce a spastic paralysis. They bind voltage-independently at site-4 of sodium channels (Nav) and shift the voltage of activation toward more negative potentials thereby affecting sodium channel activation and promoting spontaneous and repetitive firing. This toxin is active only on insects. In Olivierus martensii (Manchurian scorpion), this protein is Beta-insect excitatory toxin BmKIT1.